The primary structure comprises 160 residues: Small ribosomal subunit protein uS7 (160 aa).

Belongs to the universal ribosomal protein uS7 family. In terms of assembly, part of the 30S ribosomal subunit. Contacts proteins S9 and S11.

Functionally, one of the primary rRNA binding proteins, it binds directly to 16S rRNA where it nucleates assembly of the head domain of the 30S subunit. Is located at the subunit interface close to the decoding center, probably blocks exit of the E-site tRNA. In Rickettsia canadensis (strain McKiel), this protein is Small ribosomal subunit protein uS7.